Consider the following 424-residue polypeptide: Tyrosine--tRNA ligase (424 aa).

L-tyrosine is bound at residue Tyr37. Positions 42–51 (PTADSLHLGH) match the 'HIGH' region motif. N6-acetyllysine is present on Lys144. Tyr175 and Gln179 together coordinate L-tyrosine. Residues 235 to 239 (KFGKT) carry the 'KMSKS' region motif. Residue Lys238 participates in ATP binding. One can recognise an S4 RNA-binding domain in the interval 357–414 (ADLMQALVDSELQPSRGQARKTIASNAITINGEKQSDPEYFFKEEDRLFGRFTLLRRG).

It belongs to the class-I aminoacyl-tRNA synthetase family. TyrS type 1 subfamily. As to quaternary structure, homodimer.

It localises to the cytoplasm. It catalyses the reaction tRNA(Tyr) + L-tyrosine + ATP = L-tyrosyl-tRNA(Tyr) + AMP + diphosphate + H(+). Catalyzes the attachment of tyrosine to tRNA(Tyr) in a two-step reaction: tyrosine is first activated by ATP to form Tyr-AMP and then transferred to the acceptor end of tRNA(Tyr). In Shigella flexneri serotype 5b (strain 8401), this protein is Tyrosine--tRNA ligase.